The primary structure comprises 371 residues: Capsular polysaccharide phosphotransferase cps12A (371 aa).

It belongs to the stealth family.

Functionally, part of a capsular polysaccharide synthesis locus. The polypeptide is Capsular polysaccharide phosphotransferase cps12A (cps12A) (Actinobacillus pleuropneumoniae (Haemophilus pleuropneumoniae)).